The chain runs to 332 residues: DNA-directed RNA polymerase subunit alpha (332 aa).

Positions 1-232 (MKGYLKDFLK…DQLSVFVDLE (232 aa)) are alpha N-terminal domain (alpha-NTD). The alpha C-terminal domain (alpha-CTD) stretch occupies residues 247–332 (IDPVLLRPID…SLGDRARIAG (86 aa)).

The protein belongs to the RNA polymerase alpha chain family. In terms of assembly, homodimer. The RNAP catalytic core consists of 2 alpha, 1 beta, 1 beta' and 1 omega subunit. When a sigma factor is associated with the core the holoenzyme is formed, which can initiate transcription.

It carries out the reaction RNA(n) + a ribonucleoside 5'-triphosphate = RNA(n+1) + diphosphate. In terms of biological role, DNA-dependent RNA polymerase catalyzes the transcription of DNA into RNA using the four ribonucleoside triphosphates as substrates. The polypeptide is DNA-directed RNA polymerase subunit alpha (Halorhodospira halophila (strain DSM 244 / SL1) (Ectothiorhodospira halophila (strain DSM 244 / SL1))).